The following is a 130-amino-acid chain: Fluoride-specific ion channel FluC (130 aa).

4 consecutive transmembrane segments (helical) span residues 9 to 29 (LAII…TIFL), 39 to 59 (YATF…VTLA), 71 to 91 (LLLA…ALEV), and 104 to 124 (VLYG…GSLI). Positions 79 and 82 each coordinate Na(+).

The protein belongs to the fluoride channel Fluc/FEX (TC 1.A.43) family.

It is found in the cell inner membrane. It catalyses the reaction fluoride(in) = fluoride(out). With respect to regulation, na(+) is not transported, but it plays an essential structural role and its presence is essential for fluoride channel function. Functionally, fluoride-specific ion channel. Important for reducing fluoride concentration in the cell, thus reducing its toxicity. This chain is Fluoride-specific ion channel FluC, found in Synechocystis sp. (strain ATCC 27184 / PCC 6803 / Kazusa).